A 116-amino-acid polypeptide reads, in one-letter code: Promotilin (116 aa).

Positions 1 to 25 (MVSRKAVAVLLMVHVAVMLASQTEA) are cleaved as a signal peptide. Residues 39-74 (REKERNKGQKKSLIVQQRSEEVGPLDPVEPPEEEEN) form a disordered region.

This sequence belongs to the motilin family.

The protein resides in the secreted. Its function is as follows. Plays an important role in the regulation of interdigestive gastrointestinal motility and indirectly causes rhythmic contraction of duodenal and colonic smooth muscle. This chain is Promotilin (MLN), found in Felis catus (Cat).